A 503-amino-acid chain; its full sequence is ATP synthase subunit alpha (503 aa).

ATP is bound at residue 169–176 (GDRKTGKT).

This sequence belongs to the ATPase alpha/beta chains family. F-type ATPases have 2 components, CF(1) - the catalytic core - and CF(0) - the membrane proton channel. CF(1) has five subunits: alpha(3), beta(3), gamma(1), delta(1), epsilon(1). CF(0) has three main subunits: a(1), b(2) and c(9-12). The alpha and beta chains form an alternating ring which encloses part of the gamma chain. CF(1) is attached to CF(0) by a central stalk formed by the gamma and epsilon chains, while a peripheral stalk is formed by the delta and b chains.

It localises to the cell membrane. The catalysed reaction is ATP + H2O + 4 H(+)(in) = ADP + phosphate + 5 H(+)(out). In terms of biological role, produces ATP from ADP in the presence of a proton gradient across the membrane. The alpha chain is a regulatory subunit. This Lactobacillus helveticus (strain DPC 4571) protein is ATP synthase subunit alpha.